A 179-amino-acid polypeptide reads, in one-letter code: Phosphopantetheine adenylyltransferase (179 aa).

Ser23 is a binding site for substrate. Residues 23–24 (SF) and His31 contribute to the ATP site. 3 residues coordinate substrate: Lys55, Ala87, and Arg101. Residues 102–104 (GIR), Glu112, and 137–143 (FAHVSSS) contribute to the ATP site.

Belongs to the bacterial CoaD family. As to quaternary structure, homohexamer. Mg(2+) is required as a cofactor.

It localises to the cytoplasm. The catalysed reaction is (R)-4'-phosphopantetheine + ATP + H(+) = 3'-dephospho-CoA + diphosphate. The protein operates within cofactor biosynthesis; coenzyme A biosynthesis; CoA from (R)-pantothenate: step 4/5. Reversibly transfers an adenylyl group from ATP to 4'-phosphopantetheine, yielding dephospho-CoA (dPCoA) and pyrophosphate. The polypeptide is Phosphopantetheine adenylyltransferase (Rhodopirellula baltica (strain DSM 10527 / NCIMB 13988 / SH1)).